A 197-amino-acid polypeptide reads, in one-letter code: Cell division protein SepF (197 aa).

Residues 15–89 form a disordered region; it reads EEEEVEGPEE…RMNNNSKNNS (75 aa). The span at 22 to 42 shows a compositional bias: basic and acidic residues; that stretch reads PEERESSRSRERVQEREDYNR. The span at 43-73 shows a compositional bias: polar residues; that stretch reads NENQATPQTFNNKQQAIKSVPQKNTLRSNTT. Residues 80 to 89 are compositionally biased toward low complexity; that stretch reads RMNNNSKNNS.

This sequence belongs to the SepF family. In terms of assembly, homodimer. Interacts with FtsZ.

It localises to the cytoplasm. Its function is as follows. Cell division protein that is part of the divisome complex and is recruited early to the Z-ring. Probably stimulates Z-ring formation, perhaps through the cross-linking of FtsZ protofilaments. Its function overlaps with FtsA. This chain is Cell division protein SepF, found in Staphylococcus epidermidis (strain ATCC 35984 / DSM 28319 / BCRC 17069 / CCUG 31568 / BM 3577 / RP62A).